The following is a 510-amino-acid chain: UDP-N-acetylmuramoyl-tripeptide--D-alanyl-D-alanine ligase (510 aa).

136 to 142 (GSSGKTS) contributes to the ATP binding site.

The protein belongs to the MurCDEF family. MurF subfamily.

The protein resides in the cytoplasm. It catalyses the reaction D-alanyl-D-alanine + UDP-N-acetyl-alpha-D-muramoyl-L-alanyl-gamma-D-glutamyl-meso-2,6-diaminopimelate + ATP = UDP-N-acetyl-alpha-D-muramoyl-L-alanyl-gamma-D-glutamyl-meso-2,6-diaminopimeloyl-D-alanyl-D-alanine + ADP + phosphate + H(+). It participates in cell wall biogenesis; peptidoglycan biosynthesis. Involved in cell wall formation. Catalyzes the final step in the synthesis of UDP-N-acetylmuramoyl-pentapeptide, the precursor of murein. The polypeptide is UDP-N-acetylmuramoyl-tripeptide--D-alanyl-D-alanine ligase (Mycobacterium tuberculosis (strain CDC 1551 / Oshkosh)).